A 536-amino-acid polypeptide reads, in one-letter code: Phosphoenolpyruvate carboxykinase (ATP) (536 aa).

The substrate site is built by Arg-63, Tyr-203, and Lys-209. ATP-binding positions include Lys-209, His-228, and 244 to 252 (GLSGTGKTT). Mn(2+) is bound by residues Lys-209 and His-228. Residue Asp-265 coordinates Mn(2+). ATP is bound by residues Glu-293, Arg-329, 445–446 (RI), and Thr-451. Position 329 (Arg-329) interacts with substrate.

It belongs to the phosphoenolpyruvate carboxykinase (ATP) family. Monomer. Mn(2+) serves as cofactor.

It is found in the cytoplasm. It carries out the reaction oxaloacetate + ATP = phosphoenolpyruvate + ADP + CO2. It participates in carbohydrate biosynthesis; gluconeogenesis. In terms of biological role, involved in the gluconeogenesis. Catalyzes the conversion of oxaloacetate (OAA) to phosphoenolpyruvate (PEP) through direct phosphoryl transfer between the nucleoside triphosphate and OAA. This chain is Phosphoenolpyruvate carboxykinase (ATP), found in Colwellia psychrerythraea (strain 34H / ATCC BAA-681) (Vibrio psychroerythus).